The primary structure comprises 55 residues: Large ribosomal subunit protein bL33 (55 aa).

Belongs to the bacterial ribosomal protein bL33 family.

This Pseudarthrobacter chlorophenolicus (strain ATCC 700700 / DSM 12829 / CIP 107037 / JCM 12360 / KCTC 9906 / NCIMB 13794 / A6) (Arthrobacter chlorophenolicus) protein is Large ribosomal subunit protein bL33.